Reading from the N-terminus, the 305-residue chain is Methionyl-tRNA formyltransferase (305 aa).

110 to 113 contacts (6S)-5,6,7,8-tetrahydrofolate; the sequence is SLLP.

This sequence belongs to the Fmt family.

The catalysed reaction is L-methionyl-tRNA(fMet) + (6R)-10-formyltetrahydrofolate = N-formyl-L-methionyl-tRNA(fMet) + (6S)-5,6,7,8-tetrahydrofolate + H(+). Functionally, attaches a formyl group to the free amino group of methionyl-tRNA(fMet). The formyl group appears to play a dual role in the initiator identity of N-formylmethionyl-tRNA by promoting its recognition by IF2 and preventing the misappropriation of this tRNA by the elongation apparatus. The sequence is that of Methionyl-tRNA formyltransferase from Gluconacetobacter diazotrophicus (strain ATCC 49037 / DSM 5601 / CCUG 37298 / CIP 103539 / LMG 7603 / PAl5).